The sequence spans 315 residues: Olfactory receptor 51L1 (315 aa).

Topologically, residues 1-27 are extracellular; that stretch reads MGDWNNSDAVEPIFILRGFPGLEYVHS. Residue Asn-5 is glycosylated (N-linked (GlcNAc...) asparagine). Residues 28–48 traverse the membrane as a helical segment; sequence WLSILFCLAYLVAFMGNVTIL. Residues 49-56 lie on the Cytoplasmic side of the membrane; that stretch reads SVIWIESS. A helical membrane pass occupies residues 57 to 77; sequence LHQPMYYFISILAVNDLGMSL. At 78–101 the chain is on the extracellular side; that stretch reads STLPTMLAVLWLDAPEIQASACYA. Cys-99 and Cys-191 form a disulfide bridge. A helical membrane pass occupies residues 102–122; sequence QLFFIHTFTFLESSVLLAMAF. At 123 to 141 the chain is on the cytoplasmic side; sequence DRFVAICHPLHYPTILTNS. Residues 142-162 form a helical membrane-spanning segment; it reads VIGKIGLACLLRSLGVVLPTP. The Extracellular portion of the chain corresponds to 163-198; that stretch reads LLLRHYHYCHGNALSHAFCLHQDVLRLSCTDARTNS. A helical transmembrane segment spans residues 199 to 219; the sequence is IYGLCVVIATLGVDSIFILLS. Topologically, residues 220 to 239 are cytoplasmic; sequence YVLILNTVLDIASREEQLKA. Residues 240 to 260 form a helical membrane-spanning segment; it reads LNTCVSHICVVLIFFVPVIGV. The Extracellular portion of the chain corresponds to 261 to 275; the sequence is SMVHRFGKHLSPIVH. Residues 276–296 form a helical membrane-spanning segment; the sequence is ILMADIYLLLPPVLNPIVYSV. Residues 297 to 315 lie on the Cytoplasmic side of the membrane; sequence RTKQIRLGILHKFVLRRRF.

It belongs to the G-protein coupled receptor 1 family.

Its subcellular location is the cell membrane. Its function is as follows. Odorant receptor. This Homo sapiens (Human) protein is Olfactory receptor 51L1 (OR51L1).